Here is a 341-residue protein sequence, read N- to C-terminus: Ferrochelatase (341 aa).

Positions 189 and 293 each coordinate Fe cation.

This sequence belongs to the ferrochelatase family.

It localises to the cytoplasm. The enzyme catalyses heme b + 2 H(+) = protoporphyrin IX + Fe(2+). The protein operates within porphyrin-containing compound metabolism; protoheme biosynthesis; protoheme from protoporphyrin-IX: step 1/1. Functionally, catalyzes the ferrous insertion into protoporphyrin IX. This Stutzerimonas stutzeri (strain A1501) (Pseudomonas stutzeri) protein is Ferrochelatase.